The following is a 598-amino-acid chain: Elongation factor 4 (598 aa).

Residues isoleucine 4–serine 186 enclose the tr-type G domain. Residues aspartate 16–threonine 21 and asparagine 133–aspartate 136 each bind GTP.

This sequence belongs to the TRAFAC class translation factor GTPase superfamily. Classic translation factor GTPase family. LepA subfamily.

The protein localises to the cell inner membrane. It carries out the reaction GTP + H2O = GDP + phosphate + H(+). Its function is as follows. Required for accurate and efficient protein synthesis under certain stress conditions. May act as a fidelity factor of the translation reaction, by catalyzing a one-codon backward translocation of tRNAs on improperly translocated ribosomes. Back-translocation proceeds from a post-translocation (POST) complex to a pre-translocation (PRE) complex, thus giving elongation factor G a second chance to translocate the tRNAs correctly. Binds to ribosomes in a GTP-dependent manner. The polypeptide is Elongation factor 4 (Ehrlichia ruminantium (strain Gardel)).